The following is a 76-amino-acid chain: MEKLTILLLVAAVLMSTQALMQEQRQKAKINLFSKRKPSAERRWVDVGCTFLLGSCTADAECCSDNCVETYCDLWW.

A signal peptide spans Met1–Ala19. A propeptide spanning residues Leu20–Glu41 is cleaved from the precursor. 3 disulfides stabilise this stretch: Cys49–Cys63, Cys56–Cys67, and Cys62–Cys72.

It belongs to the conotoxin O2 superfamily. As to expression, expressed by the venom duct.

It is found in the secreted. Functionally, inhibits voltage-gated ion channels. The protein is Conotoxin Vc6.9 of Conus victoriae (Queen Victoria cone).